The chain runs to 181 residues: Large ribosomal subunit protein uL6 (181 aa).

The protein belongs to the universal ribosomal protein uL6 family. Part of the 50S ribosomal subunit.

Functionally, this protein binds to the 23S rRNA, and is important in its secondary structure. It is located near the subunit interface in the base of the L7/L12 stalk, and near the tRNA binding site of the peptidyltransferase center. The sequence is that of Large ribosomal subunit protein uL6 from Phytoplasma mali (strain AT).